Consider the following 735-residue polypeptide: Coiled-coil quantitatively-enriched protein 1 (735 aa).

Positions Ala-514 to Leu-719 form a coiled coil.

In terms of assembly, interacts (during meiosis) with pcp1. Interacts with clr3, pot1, taz1 and tpz1.

It localises to the nucleus. The protein localises to the nucleoplasm. Its subcellular location is the chromosome. The protein resides in the telomere. Functionally, component of the meiotic bouquet that facilitates meiotic nuclear reorganization of the telomeres to the centrosome. Links telomeres to the meiotic centrosome component pcp1. Essential for the formation of normal telomere clusters during meiotic prophase. Required for telomere length regulation and chromosome segregation. Required for proper positioning of nucleosomes at heterochromatic loci and for transcriptional gene silencing (TGS) function of the Snf2/Hdac-containing repressor complex (SHREC). The protein is Coiled-coil quantitatively-enriched protein 1 (ccq1) of Schizosaccharomyces pombe (strain 972 / ATCC 24843) (Fission yeast).